A 98-amino-acid chain; its full sequence is MPSISTNIILAFITALLGMLIFRSHLMSSLLCLEGMMLSMFILSTLTILNLHFTASFMMPILLLVFAACEAAVGLALLVTVSNTYGLDYIQNLNLLQC.

The next 3 membrane-spanning stretches (helical) occupy residues 2–22 (PSIS…MLIF), 29–49 (SLLC…LTIL), and 61–81 (ILLL…LVTV).

Belongs to the complex I subunit 4L family. In terms of assembly, core subunit of respiratory chain NADH dehydrogenase (Complex I) which is composed of 45 different subunits.

It is found in the mitochondrion inner membrane. The catalysed reaction is a ubiquinone + NADH + 5 H(+)(in) = a ubiquinol + NAD(+) + 4 H(+)(out). Core subunit of the mitochondrial membrane respiratory chain NADH dehydrogenase (Complex I) which catalyzes electron transfer from NADH through the respiratory chain, using ubiquinone as an electron acceptor. Part of the enzyme membrane arm which is embedded in the lipid bilayer and involved in proton translocation. The sequence is that of NADH-ubiquinone oxidoreductase chain 4L (MT-ND4L) from Eulemur mongoz (Mongoose lemur).